The following is a 377-amino-acid chain: Histone deacetylase 8 (377 aa).

Residues 5–336 form a histone deacetylase region; sequence RVDVFWHEGM…LHAMLEGVLK (332 aa). Catalysis depends on histidine 145, which acts as the Proton donor/acceptor. Zn(2+) contacts are provided by aspartate 182, histidine 184, and aspartate 274.

Belongs to the histone deacetylase family. The cofactor is Zn(2+). In terms of tissue distribution, expressed in stems, leaves, flowers, siliques and mature seeds.

It is found in the nucleus. The protein localises to the cytoplasm. The enzyme catalyses N(6)-acetyl-L-lysyl-[histone] + H2O = L-lysyl-[histone] + acetate. In terms of biological role, responsible for the deacetylation of lysine residues on the N-terminal part of the core histones (H2A, H2B, H3 and H4). Histone deacetylation gives a tag for epigenetic repression and plays an important role in transcriptional regulation, cell cycle progression and developmental events. Histone deacetylases act via the formation of large multiprotein complexes. This is Histone deacetylase 8 from Arabidopsis thaliana (Mouse-ear cress).